The chain runs to 86 residues: Large ribosomal subunit protein bL27 (86 aa).

Residues 1–22 (MAHKKAGGSSRNGRDSESKRLG) are disordered.

This sequence belongs to the bacterial ribosomal protein bL27 family.

The protein is Large ribosomal subunit protein bL27 of Acidithiobacillus ferrooxidans (strain ATCC 23270 / DSM 14882 / CIP 104768 / NCIMB 8455) (Ferrobacillus ferrooxidans (strain ATCC 23270)).